Consider the following 258-residue polypeptide: Aspartate/glutamate leucyltransferase (258 aa).

This sequence belongs to the R-transferase family. Bpt subfamily.

The protein resides in the cytoplasm. The enzyme catalyses N-terminal L-glutamyl-[protein] + L-leucyl-tRNA(Leu) = N-terminal L-leucyl-L-glutamyl-[protein] + tRNA(Leu) + H(+). It carries out the reaction N-terminal L-aspartyl-[protein] + L-leucyl-tRNA(Leu) = N-terminal L-leucyl-L-aspartyl-[protein] + tRNA(Leu) + H(+). Its function is as follows. Functions in the N-end rule pathway of protein degradation where it conjugates Leu from its aminoacyl-tRNA to the N-termini of proteins containing an N-terminal aspartate or glutamate. The sequence is that of Aspartate/glutamate leucyltransferase from Rhodopseudomonas palustris (strain BisA53).